Reading from the N-terminus, the 134-residue chain is ATP synthase epsilon chain (134 aa).

Belongs to the ATPase epsilon chain family. In terms of assembly, F-type ATPases have 2 components, CF(1) - the catalytic core - and CF(0) - the membrane proton channel. CF(1) has five subunits: alpha(3), beta(3), gamma(1), delta(1), epsilon(1). CF(0) has three main subunits: a, b and c.

Its subcellular location is the cell membrane. Functionally, produces ATP from ADP in the presence of a proton gradient across the membrane. The polypeptide is ATP synthase epsilon chain (Anoxybacillus flavithermus (strain DSM 21510 / WK1)).